A 156-amino-acid polypeptide reads, in one-letter code: Enhancer of split M1 protein (156 aa).

Residues M1–G19 form the signal peptide. Kazal-like domains lie at S23–S81 and K96–C156. Disulfide bonds link C29–C62, C33–C55, C102–C135, C106–C128, and C114–C156.

This chain is Enhancer of split M1 protein, found in Drosophila simulans (Fruit fly).